The primary structure comprises 349 residues: UDP-3-O-acylglucosamine N-acyltransferase (349 aa).

Catalysis depends on His-248, which acts as the Proton acceptor.

The protein belongs to the transferase hexapeptide repeat family. LpxD subfamily. As to quaternary structure, homotrimer.

It carries out the reaction a UDP-3-O-[(3R)-3-hydroxyacyl]-alpha-D-glucosamine + a (3R)-hydroxyacyl-[ACP] = a UDP-2-N,3-O-bis[(3R)-3-hydroxyacyl]-alpha-D-glucosamine + holo-[ACP] + H(+). It participates in bacterial outer membrane biogenesis; LPS lipid A biosynthesis. In terms of biological role, catalyzes the N-acylation of UDP-3-O-acylglucosamine using 3-hydroxyacyl-ACP as the acyl donor. Is involved in the biosynthesis of lipid A, a phosphorylated glycolipid that anchors the lipopolysaccharide to the outer membrane of the cell. The polypeptide is UDP-3-O-acylglucosamine N-acyltransferase (Colwellia psychrerythraea (strain 34H / ATCC BAA-681) (Vibrio psychroerythus)).